We begin with the raw amino-acid sequence, 208 residues long: ATP synthase subunit b (208 aa).

The segment covering 1-18 (MFVSTAFAQTATESQPAS) has biased composition (polar residues). The tract at residues 1–26 (MFVSTAFAQTATESQPASTAGEHGAA) is disordered. The helical transmembrane segment at 56-78 (SQVLWLAITFGLFYLFLSRVVLP) threads the bilayer.

The protein belongs to the ATPase B chain family. As to quaternary structure, F-type ATPases have 2 components, F(1) - the catalytic core - and F(0) - the membrane proton channel. F(1) has five subunits: alpha(3), beta(3), gamma(1), delta(1), epsilon(1). F(0) has three main subunits: a(1), b(2) and c(10-14). The alpha and beta chains form an alternating ring which encloses part of the gamma chain. F(1) is attached to F(0) by a central stalk formed by the gamma and epsilon chains, while a peripheral stalk is formed by the delta and b chains.

Its subcellular location is the cell inner membrane. Functionally, f(1)F(0) ATP synthase produces ATP from ADP in the presence of a proton or sodium gradient. F-type ATPases consist of two structural domains, F(1) containing the extramembraneous catalytic core and F(0) containing the membrane proton channel, linked together by a central stalk and a peripheral stalk. During catalysis, ATP synthesis in the catalytic domain of F(1) is coupled via a rotary mechanism of the central stalk subunits to proton translocation. Its function is as follows. Component of the F(0) channel, it forms part of the peripheral stalk, linking F(1) to F(0). The sequence is that of ATP synthase subunit b from Brucella melitensis biotype 1 (strain ATCC 23456 / CCUG 17765 / NCTC 10094 / 16M).